A 204-amino-acid chain; its full sequence is LexA repressor (204 aa).

A DNA-binding region (H-T-H motif) is located at residues 31 to 51; it reads VREIGQAVGLKSSSTVHTHLV. Active-site for autocatalytic cleavage activity residues include Ser-128 and Lys-165.

It belongs to the peptidase S24 family. Homodimer.

It carries out the reaction Hydrolysis of Ala-|-Gly bond in repressor LexA.. Represses a number of genes involved in the response to DNA damage (SOS response), including recA and lexA. In the presence of single-stranded DNA, RecA interacts with LexA causing an autocatalytic cleavage which disrupts the DNA-binding part of LexA, leading to derepression of the SOS regulon and eventually DNA repair. The polypeptide is LexA repressor (Syntrophomonas wolfei subsp. wolfei (strain DSM 2245B / Goettingen)).